Reading from the N-terminus, the 238-residue chain is Group 3 late-embryogenesis abundant protein, mitochondrial (238 aa).

Residues 41-62 (SSGSGRPADNWAESQKEKAKAG) form a disordered region. Residues 50–202 (NWAESQKEKA…AGDLKDKAQQ (153 aa)) are a coiled coil. LEA 11-mer repeat repeat units lie at residues 64–74 (KDAQAEVGKVA), 89–99 (KDAVKQGANDL), 140–150 (KEAAENAWEKT), 151–161 (KDVAENLKDKV), 179–189 (KDRAQDAASEV), and 190–200 (KHKAGDLKDKA). Basic and acidic residues-rich tracts occupy residues 182-200 (AQDA…KDKA) and 213-225 (DNRK…RRDS). Positions 182–238 (AQDAASEVKHKAGDLKDKAQQVIHDATTQSGDNRKQDQQQRRDSQGSQSGQNSRSRN) are disordered. A compositionally biased stretch (low complexity) spans 226–238 (QGSQSGQNSRSRN).

It belongs to the LEA type 4 family.

The protein localises to the mitochondrion. Mitochondrial heat soluble protein acting as a molecular shield in water-deficient condition. The chain is Group 3 late-embryogenesis abundant protein, mitochondrial from Hypsibius exemplaris (Freshwater tardigrade).